Here is a 274-residue protein sequence, read N- to C-terminus: 2,3,4,5-tetrahydropyridine-2,6-dicarboxylate N-succinyltransferase (274 aa).

It belongs to the transferase hexapeptide repeat family.

The protein localises to the cytoplasm. It carries out the reaction (S)-2,3,4,5-tetrahydrodipicolinate + succinyl-CoA + H2O = (S)-2-succinylamino-6-oxoheptanedioate + CoA. It functions in the pathway amino-acid biosynthesis; L-lysine biosynthesis via DAP pathway; LL-2,6-diaminopimelate from (S)-tetrahydrodipicolinate (succinylase route): step 1/3. This chain is 2,3,4,5-tetrahydropyridine-2,6-dicarboxylate N-succinyltransferase, found in Delftia acidovorans (strain DSM 14801 / SPH-1).